The chain runs to 290 residues: Acetylglutamate kinase (290 aa).

Substrate-binding positions include 64-65 (GG), arginine 86, and asparagine 183.

It belongs to the acetylglutamate kinase family. ArgB subfamily.

It localises to the cytoplasm. The catalysed reaction is N-acetyl-L-glutamate + ATP = N-acetyl-L-glutamyl 5-phosphate + ADP. It participates in amino-acid biosynthesis; L-arginine biosynthesis; N(2)-acetyl-L-ornithine from L-glutamate: step 2/4. Functionally, catalyzes the ATP-dependent phosphorylation of N-acetyl-L-glutamate. This is Acetylglutamate kinase from Halothermothrix orenii (strain H 168 / OCM 544 / DSM 9562).